The primary structure comprises 149 residues: NPC intracellular cholesterol transporter 2 (149 aa).

A signal peptide spans 1-21 (MRLLVAAFLLLALGDLGPGGA). Disulfide bonds link Cys27–Cys140, Cys42–Cys47, and Cys93–Cys99. A glycan (N-linked (GlcNAc...) asparagine) is linked at Asn58. Lys116 is modified (N6-acetyllysine).

Belongs to the NPC2 family. Interacts with NPC1 (via the second lumenal domain) in a cholestrol-dependent manner. Interacts with NUS1/NgBR, the interaction stabilizes NCP2 and regulates cholesterol trafficking. Interacts with DHDDS. Interacts with NEDD4L (via C2 domain). Interacts with NPC1L1. As to expression, epididymis. High levels are found in the caput and corpus regions. Weaker levels in the distal cauda and in the efferent ducts.

The protein resides in the secreted. It is found in the endoplasmic reticulum. The protein localises to the lysosome. The enzyme catalyses cholesterol(in) = cholesterol(out). Functionally, intracellular cholesterol transporter which acts in concert with NPC1 and plays an important role in the egress of cholesterol from the lysosomal compartment. Unesterified cholesterol that has been released from LDLs in the lumen of the late endosomes/lysosomes is transferred by NPC2 to the cholesterol-binding pocket in the N-terminal domain of NPC1. May bind and mobilize cholesterol that is associated with membranes. NPC2 binds cholesterol with a 1:1 stoichiometry. Can bind a variety of sterols, including lathosterol, desmosterol and the plant sterols stigmasterol and beta-sitosterol. The secreted form of NCP2 regulates biliary cholesterol secretion via stimulation of ABCG5/ABCG8-mediated cholesterol transport. The chain is NPC intracellular cholesterol transporter 2 from Canis lupus familiaris (Dog).